Consider the following 202-residue polypeptide: Small ribosomal subunit protein uS4 (202 aa).

Residues Arg93–Val155 enclose the S4 RNA-binding domain.

Belongs to the universal ribosomal protein uS4 family. As to quaternary structure, part of the 30S ribosomal subunit. Contacts protein S5. The interaction surface between S4 and S5 is involved in control of translational fidelity.

Functionally, one of the primary rRNA binding proteins, it binds directly to 16S rRNA where it nucleates assembly of the body of the 30S subunit. With S5 and S12 plays an important role in translational accuracy. In Rhodopirellula baltica (strain DSM 10527 / NCIMB 13988 / SH1), this protein is Small ribosomal subunit protein uS4.